A 326-amino-acid chain; its full sequence is Vitamin B12 import system permease protein BtuC (326 aa).

The next 9 membrane-spanning stretches (helical) occupy residues 19 to 39 (LSVL…LWIL), 61 to 81 (LAVL…QALF), 88 to 108 (PGLL…VLLG), 112 to 132 (LPNW…TLIL), 146 to 166 (LLAG…AIYF), 184 to 204 (GGVD…LLWI), 240 to 260 (GWMV…GLVI), 274 to 294 (VLLP…DIVA), and 302 to 322 (ELPI…WLLL).

This sequence belongs to the binding-protein-dependent transport system permease family. FecCD subfamily. In terms of assembly, the complex is composed of two ATP-binding proteins (BtuD), two transmembrane proteins (BtuC) and a solute-binding protein (BtuF).

The protein localises to the cell inner membrane. In terms of biological role, part of the ABC transporter complex BtuCDF involved in vitamin B12 import. Involved in the translocation of the substrate across the membrane. The chain is Vitamin B12 import system permease protein BtuC from Escherichia coli O6:K15:H31 (strain 536 / UPEC).